A 398-amino-acid polypeptide reads, in one-letter code: 1-deoxy-D-xylulose 5-phosphate reductoisomerase (398 aa).

Residues Thr10, Gly11, Ser12, Ile13, Gly36, Arg37, Asn38, and Asn124 each coordinate NADPH. Residue Lys125 participates in 1-deoxy-D-xylulose 5-phosphate binding. Position 126 (Glu126) interacts with NADPH. Asp150 serves as a coordination point for Mn(2+). 1-deoxy-D-xylulose 5-phosphate is bound by residues Ser151, Glu152, Ser186, and His209. Residue Glu152 coordinates Mn(2+). Gly215 is an NADPH binding site. Residues Ser222, Asn227, Lys228, and Glu231 each contribute to the 1-deoxy-D-xylulose 5-phosphate site. Glu231 contributes to the Mn(2+) binding site.

It belongs to the DXR family. As to quaternary structure, homodimer. Requires Mg(2+) as cofactor. It depends on Mn(2+) as a cofactor.

It catalyses the reaction 2-C-methyl-D-erythritol 4-phosphate + NADP(+) = 1-deoxy-D-xylulose 5-phosphate + NADPH + H(+). The protein operates within isoprenoid biosynthesis; isopentenyl diphosphate biosynthesis via DXP pathway; isopentenyl diphosphate from 1-deoxy-D-xylulose 5-phosphate: step 1/6. In terms of biological role, catalyzes the NADPH-dependent rearrangement and reduction of 1-deoxy-D-xylulose-5-phosphate (DXP) to 2-C-methyl-D-erythritol 4-phosphate (MEP). The polypeptide is 1-deoxy-D-xylulose 5-phosphate reductoisomerase (Yersinia enterocolitica serotype O:8 / biotype 1B (strain NCTC 13174 / 8081)).